A 446-amino-acid chain; its full sequence is Exodeoxyribonuclease 7 large subunit (446 aa).

The protein belongs to the XseA family. Heterooligomer composed of large and small subunits.

Its subcellular location is the cytoplasm. The enzyme catalyses Exonucleolytic cleavage in either 5'- to 3'- or 3'- to 5'-direction to yield nucleoside 5'-phosphates.. In terms of biological role, bidirectionally degrades single-stranded DNA into large acid-insoluble oligonucleotides, which are then degraded further into small acid-soluble oligonucleotides. This Streptococcus pneumoniae (strain ATCC BAA-255 / R6) protein is Exodeoxyribonuclease 7 large subunit.